Here is a 409-residue protein sequence, read N- to C-terminus: Elongation factor Tu, chloroplastic (409 aa).

The tr-type G domain occupies 10–214 (KPHVNIGTIG…NVDSYIPTPA (205 aa)). The tract at residues 19–26 (GHVDHGKT) is G1. 19-26 (GHVDHGKT) contributes to the GTP binding site. Thr26 serves as a coordination point for Mg(2+). The interval 60–64 (GITIN) is G2. A G3 region spans residues 81-84 (DCPG). Residues 81-85 (DCPGH) and 136-139 (NKED) contribute to the GTP site. The G4 stretch occupies residues 136 to 139 (NKED). Residues 174-176 (SAL) are G5.

This sequence belongs to the TRAFAC class translation factor GTPase superfamily. Classic translation factor GTPase family. EF-Tu/EF-1A subfamily.

It localises to the plastid. The protein resides in the chloroplast. It catalyses the reaction GTP + H2O = GDP + phosphate + H(+). Its function is as follows. GTP hydrolase that promotes the GTP-dependent binding of aminoacyl-tRNA to the A-site of ribosomes during protein biosynthesis. In Ostreococcus tauri, this protein is Elongation factor Tu, chloroplastic (tufA).